The following is a 151-amino-acid chain: Ribosome maturation factor RimP (151 aa).

This sequence belongs to the RimP family.

It localises to the cytoplasm. In terms of biological role, required for maturation of 30S ribosomal subunits. This is Ribosome maturation factor RimP from Shewanella sp. (strain MR-4).